The primary structure comprises 271 residues: Tryptophan synthase alpha chain (271 aa).

Active-site proton acceptor residues include Glu49 and Asp60.

The protein belongs to the TrpA family. In terms of assembly, tetramer of two alpha and two beta chains.

The catalysed reaction is (1S,2R)-1-C-(indol-3-yl)glycerol 3-phosphate + L-serine = D-glyceraldehyde 3-phosphate + L-tryptophan + H2O. It participates in amino-acid biosynthesis; L-tryptophan biosynthesis; L-tryptophan from chorismate: step 5/5. In terms of biological role, the alpha subunit is responsible for the aldol cleavage of indoleglycerol phosphate to indole and glyceraldehyde 3-phosphate. The chain is Tryptophan synthase alpha chain from Paraburkholderia phymatum (strain DSM 17167 / CIP 108236 / LMG 21445 / STM815) (Burkholderia phymatum).